We begin with the raw amino-acid sequence, 510 residues long: GTPase Der (510 aa).

EngA-type G domains lie at 4-168 (PVVA…AEKM) and 222-395 (IKIA…ACAT). GTP is bound by residues 10-17 (GRPNVGKS), 57-61 (DTGGI), 120-123 (NKTD), 228-235 (GRPNVGKS), 275-279 (DTAGV), and 340-343 (NKWD). Residues 396 to 480 (QKMTTSMLTR…PIRLLFQEGN (85 aa)) enclose the KH-like domain.

This sequence belongs to the TRAFAC class TrmE-Era-EngA-EngB-Septin-like GTPase superfamily. EngA (Der) GTPase family. In terms of assembly, associates with the 50S ribosomal subunit.

GTPase that plays an essential role in the late steps of ribosome biogenesis. The chain is GTPase Der from Pasteurella multocida (strain Pm70).